A 330-amino-acid chain; its full sequence is tRNA-modifying protein YgfZ (330 aa).

Folate-binding residues include tryptophan 28 and tryptophan 192.

This sequence belongs to the tRNA-modifying YgfZ family.

It is found in the cytoplasm. In terms of biological role, folate-binding protein involved in regulating the level of ATP-DnaA and in the modification of some tRNAs. It is probably a key factor in regulatory networks that act via tRNA modification, such as initiation of chromosomal replication. This chain is tRNA-modifying protein YgfZ, found in Blochmanniella pennsylvanica (strain BPEN).